An 894-amino-acid polypeptide reads, in one-letter code: Glutamate receptor 3 (894 aa).

A signal peptide spans 1-28; it reads MARQKKMGQSVLRAVFFLVLGLLGHSHG. The Extracellular portion of the chain corresponds to 29–552; sequence GFPNTISIGG…GVFSFLDPLA (524 aa). N-linked (GlcNAc...) asparagine glycosylation is found at asparagine 63, asparagine 266, asparagine 380, asparagine 415, and asparagine 422. A disulfide bridge connects residues cysteine 91 and cysteine 340. Residues proline 508, threonine 510, and arginine 515 each contribute to the L-glutamate site. The chain crosses the membrane as a helical span at residues 553 to 573; that stretch reads YEIWMCIVFAYIGVSVVLFLV. Over 574 to 602 the chain is Cytoplasmic; the sequence is SRFSPYEWHLEDNNEEPRDPQSPPDPPNE. The helical; Pore-forming intramembrane region spans 603-618; that stretch reads FGIFNSLWFSLGAFMQ. An intramembrane segment occupies 619–621; the sequence is QGC. Cysteine 621 is lipidated: S-palmitoyl cysteine. Residues 622–627 lie on the Cytoplasmic side of the membrane; that stretch reads DISPRS. Residues 628–648 traverse the membrane as a helical segment; sequence LSGRIVGGVWWFFTLIIISSY. Topologically, residues 649–823 are extracellular; sequence TANLAAFLTV…DKTSALSLSN (175 aa). Positions 686, 687, and 737 each coordinate L-glutamate. Residues cysteine 750 and cysteine 805 are joined by a disulfide bond. A helical membrane pass occupies residues 824 to 844; that stretch reads VAGVFYILVGGLGLAMMVALI. Residues 845–894 lie on the Cytoplasmic side of the membrane; sequence EFCYKSRAESKRMKLTKNTQNFKPAPATNTQNYATYREGYNVYGTESVKI. Cysteine 847 is lipidated: S-palmitoyl cysteine. 2 positions are modified to phosphotyrosine: tyrosine 877 and tyrosine 887.

It belongs to the glutamate-gated ion channel (TC 1.A.10.1) family. GRIA3 subfamily. In terms of assembly, homotetramer or heterotetramer of pore-forming glutamate receptor subunits. Tetramers may be formed by the dimerization of dimers. Interacts with PICK1, GRIP1 and GRIP2. Found in a complex with GRIA1, GRIA2, GRIA4, CNIH2, CNIH3, CACNG2, CACNG3, CACNG4, CACNG5, CACNG7 and CACNG8. Interacts with CACNG5. Found in a complex with GRIA1, GRIA2, GRIA4, DLG4, CACNG8 and CNIH2.

The protein localises to the cell membrane. Its subcellular location is the postsynaptic cell membrane. It is found in the postsynaptic density membrane. The enzyme catalyses Ca(2+)(in) = Ca(2+)(out). In terms of biological role, ionotropic glutamate receptor that functions as a ligand-gated cation channel, gated by L-glutamate and glutamatergic agonists such as alpha-amino-3-hydroxy-5-methyl-4-isoxazolepropionic acid (AMPA), quisqualic acid, and kainic acid. L-glutamate acts as an excitatory neurotransmitter at many synapses in the central nervous system and plays an important role in fast excitatory synaptic transmission by inducing long-term potentiation. Binding of the excitatory neurotransmitter L-glutamate induces a conformation change, leading to the opening of the cation channel, and thereby converts the chemical signal to an electrical impulse upon entry of calcium. The receptor then desensitizes rapidly and enters a transient inactive state, characterized by the presence of bound agonist. In the presence of CACNG8, shows resensitization which is characterized by a delayed accumulation of current flux upon continued application of glutamate. This is Glutamate receptor 3 from Homo sapiens (Human).